The primary structure comprises 1494 residues: Serine/threonine-protein kinase VPS15 (1494 aa).

G2 is lipidated: N-myristoyl glycine. The region spanning 27–307 is the Protein kinase domain; the sequence is LVLKEVLGRG…VFPNYFSPFL (281 aa). Residues 33–41 and K54 contribute to the ATP site; that span reads LGRGRFLKS. Residue D149 is the Proton acceptor of the active site. HEAT repeat units lie at residues 383–421, 480–517, 524–562, 610–646, 648–685, 687–724, and 727–764; these read NSKDEIFYSISDALKKNRHPFLKKITMDDLGTLMSLYDS, DRLQRVLPYVVALLSDPTAIVRCAAMETLCDILPLVRD, KIFPEYIFPMLSMLPEDTEESVRICYASNIAKLALTAYG, KTIAEVVQELVMGPKQTPNVRRALLQDIGELCFFFGQ, QSNDFLLPILPAFLNDRDEQLRSVFFEKIVYVCFFVGQ, SVEEYLLPYIDQALSDQTEAVIVNALECLSTLCKSSFL, and RALLQMIECVYPLLCYPSQWVRRAVVTFIAASSECLGA. 2 disordered regions span residues 859 to 903 and 1037 to 1064; these read QSVE…TVEL and SASVTSEDASSPADLVGEPSLSRTSVPD. Residues 1037–1047 show a composition bias toward low complexity; that stretch reads SASVTSEDASS. WD repeat units follow at residues 1079 to 1118, 1127 to 1166, 1184 to 1226, 1231 to 1270, 1276 to 1323, 1371 to 1409, and 1466 to 1494; these read EHRSAVNDIATSSDHSFFVSASDDSTVKVWDSRKLEKDIS, LEGSRGMCTTMLRNSTQVVVGASDGVIHMFSIDHISRGLG, KEGA…DAWT, PEEGYVSSLVTSPCGNWFVSGSSRGVLTLWDLRFRVPVNS, ICPI…CHQV, PRLPGIRSLLPLPGGDLLTGGTDLKIRRWDYSSPERSYC, and DSVQSLASVKLNQRLLISSSRDGAIKVWK.

This sequence belongs to the protein kinase superfamily. Ser/Thr protein kinase family. In terms of assembly, interacts with VPS34. Component of a complex made of VPS38/USL1 and PI3K main subunits such as VPS15, ATG6/VPS30 and VPS34. In terms of processing, autophosphorylated. Mainly expressed in anthers, pollen grains and pollen tubes, and, to a lower extent, in other tissues and organs including seedlings, roots, stems, leaves, flowers, pitils and siliques.

The protein resides in the cytoplasm. It is found in the golgi apparatus. It localises to the trans-Golgi network membrane. The protein localises to the endosome membrane. The catalysed reaction is L-seryl-[protein] + ATP = O-phospho-L-seryl-[protein] + ADP + H(+). The enzyme catalyses L-threonyl-[protein] + ATP = O-phospho-L-threonyl-[protein] + ADP + H(+). In terms of biological role, serine/threonine-protein kinase required for cytoplasm to vacuole transport (Cvt) and autophagy as a part of the autophagy-specific VPS34 PI3-kinase complex I. Required for pollen development and germination, probably via the modulation of phosphatidylinositol 3-phosphate (PI3P) formation and vacuolar organization. This chain is Serine/threonine-protein kinase VPS15, found in Arabidopsis thaliana (Mouse-ear cress).